The primary structure comprises 1788 residues: Protein Shroom3 (1788 aa).

Disordered regions lie at residues 1 to 25 (MMQV…STSD), 146 to 174 (EVNS…HGRL), 225 to 263 (KAAG…ESSP), 321 to 367 (GAKS…KQEG), 382 to 401 (PDIS…PLRL), 469 to 488 (NIAS…QADH), 498 to 548 (TVHA…GNKL), 727 to 768 (EISP…VTPT), 793 to 821 (TAEQ…APLT), 876 to 915 (TGRR…SMNS), 1011 to 1067 (SRRH…SASN), 1086 to 1133 (SFKN…PETK), 1171 to 1263 (KRGK…SEAE), 1303 to 1324 (DTES…PPSL), 1404 to 1467 (VPAP…AKSQ), and 1507 to 1538 (ALKE…KRET). Composition is skewed to polar residues over residues 147 to 161 (VNSS…SRQP) and 230 to 240 (HSTNTSSNAAQ). Composition is skewed to basic and acidic residues over residues 245–259 (VHGD…ERSP) and 357–366 (SVKEREKKQE). The segment covering 476–488 (NKMDERSNRQADH) has biased composition (basic and acidic residues). Positions 708–811 (VKDAQCKVLE…SEPEKMNEVG (104 aa)) constitute an ASD1 domain. Positions 793-808 (TAEQKKRSYSEPEKMN) are enriched in basic and acidic residues. Residues 893–903 (QSTYFSGSIMD) are compositionally biased toward polar residues. The span at 904-915 (NQSMTSTSSMNS) shows a compositional bias: low complexity. Polar residues-rich tracts occupy residues 1055–1067 (EVGN…SASN), 1100–1124 (ENSS…SISG), and 1211–1263 (TSAQ…SEAE). Residues 1313-1323 (PPSPPPFPPPS) show a composition bias toward pro residues. Over residues 1433-1451 (SILQSSEGNFNPSDSQSTL) the composition is skewed to polar residues. Residues 1467–1756 (QELAKEIVTK…QLRCLTESLP (290 aa)) enclose the ASD2 domain. Positions 1529–1538 (SEXKEEKRET) are enriched in basic and acidic residues. Residues 1653-1708 (RLARVENALSSLGEDASAEERKTWNEKKKQLCGQHEDARELKENLDRREKLVMDFL) adopt a coiled-coil conformation.

This sequence belongs to the shroom family. Interacts with F-actin. Interacts with ROCK1. In terms of tissue distribution, expressed in epithelial cells of the cement gland.

The protein resides in the cell junction. It is found in the adherens junction. Its subcellular location is the cytoplasm. The protein localises to the cytoskeleton. It localises to the apical cell membrane. Controls cell shape changes in the neuroepithelium during neural tube closure. Induces apical constriction in epithelial cells by promoting the apical accumulation of F-actin and myosin II, and probably by bundling stress fibers. Induces apicobasal cell elongation by redistributing gamma-tubulin and directing the assembly of robust apicobasal microtubule arrays. The chain is Protein Shroom3 (shroom3) from Xenopus laevis (African clawed frog).